We begin with the raw amino-acid sequence, 226 residues long: Probable peroxiredoxin prdx-3 (226 aa).

Residues 33–191 (LGPKNTVPAF…TLRVLKAFQF (159 aa)) form the Thioredoxin domain. Cys-78 acts as the Cysteine sulfenic acid (-SOH) intermediate in catalysis.

Belongs to the peroxiredoxin family. AhpC/Prx1 subfamily. In terms of assembly, homodimer; disulfide-linked, upon oxidation.

The catalysed reaction is a hydroperoxide + [thioredoxin]-dithiol = an alcohol + [thioredoxin]-disulfide + H2O. Its function is as follows. Thiol-specific peroxidase that catalyzes the reduction of hydrogen peroxide and organic hydroperoxides to water and alcohols, respectively. Plays a role in cell protection against oxidative stress by detoxifying peroxides and as sensor of hydrogen peroxide-mediated signaling events. The protein is Probable peroxiredoxin prdx-3 (prdx-3) of Caenorhabditis elegans.